The primary structure comprises 626 residues: DNA mismatch repair protein MutL (626 aa).

2 disordered regions span residues 385–413 (SGAS…PSMV) and 418–437 (LTPS…VAPD).

Belongs to the DNA mismatch repair MutL/HexB family.

In terms of biological role, this protein is involved in the repair of mismatches in DNA. It is required for dam-dependent methyl-directed DNA mismatch repair. May act as a 'molecular matchmaker', a protein that promotes the formation of a stable complex between two or more DNA-binding proteins in an ATP-dependent manner without itself being part of a final effector complex. In Chlorobaculum parvum (strain DSM 263 / NCIMB 8327) (Chlorobium vibrioforme subsp. thiosulfatophilum), this protein is DNA mismatch repair protein MutL.